Reading from the N-terminus, the 37-residue chain is Large ribosomal subunit protein bL36A (37 aa).

It belongs to the bacterial ribosomal protein bL36 family.

The polypeptide is Large ribosomal subunit protein bL36A (Kocuria rhizophila (strain ATCC 9341 / DSM 348 / NBRC 103217 / DC2201)).